The primary structure comprises 665 residues: MVEAIVEFDYQAQHDDELTISVGEIITNIRKEDGGWWEGQINGRRGLFPDNFVREIKKEMKKDPLTNKAPEKPLHEVPSGNSLLSSETILRTNKRGERRRRRCQVAFSYLPQNDDELELKVGDIIEVVGEVEEGWWEGVLNGKTGMFPSNFIKELSGESDELGISQDEQLSKSSLRETTGSESDGGDSSSTKSEGANGTVATAAIQPKKVKGVGFGDIFKDKPIKLRPRSIEVENDFLPVEKTIGKKLPATTATPDSSKTEMDSRTKSKDYCKVIFPYEAQNDDELTIKEGDIVTLINKDCIDVGWWEGELNGRRGVFPDNFVKLLPPDFEKEGNRPKKPPPPSAPVIKQGAGTTERKHEIKKIPPERPEMLPNRTEEKERPEREPKLDLQKPSVPAIPPKKPRPPKTNSLSRPGALPPRRPERPVGPLTHTRGDSPKIDLAGSSLSGILDKDLSDRSNDIDLEGFDSVVSSTEKLSHPTTSRPKATGRRPPSQSLTSSSLSSPDIFDSPSPEEDKEEHISLAHRGVDASKKTSKTVTISQVSDNKASLPPKPGTMAAGGGGPAPLSSAAPSPLSSSLGTAGHRANSPSLFGTEGKPKMEPAASSQAAVEELRTQVRELRSIIETMKDQQKREIKQLLSELDEEKKIRLRLQMEVNDIKKALQSK.

2 consecutive SH3 domains span residues 1-58 (MVEA…EIKK) and 98-157 (RRRR…ELSG). A phosphoserine mark is found at S156, S159, S183, and S230. Residues 159 to 200 (SDELGISQDEQLSKSSLRETTGSESDGGDSSSTKSEGANGTV) form a disordered region. Low complexity predominate over residues 177–195 (ETTGSESDGGDSSSTKSEG). T254 carries the phosphothreonine modification. An SH3 3 domain is found at 267-328 (KSKDYCKVIF…PDNFVKLLPP (62 aa)). Disordered regions lie at residues 328–444 (PDFE…LAGS) and 467–610 (DSVV…AAVE). Over residues 355–390 (TERKHEIKKIPPERPEMLPNRTEEKERPEREPKLDL) the composition is skewed to basic and acidic residues. Position 436 is a phosphoserine (S436). The segment covering 469-484 (VVSSTEKLSHPTTSRP) has biased composition (polar residues). A compositionally biased stretch (low complexity) spans 491–510 (PPSQSLTSSSLSSPDIFDSP). Phosphoserine occurs at positions 509, 511, and 521. Over residues 517–531 (EEHISLAHRGVDASK) the composition is skewed to basic and acidic residues. The span at 535–546 (KTVTISQVSDNK) shows a compositional bias: polar residues. Over residues 564–582 (APLSSAAPSPLSSSLGTAG) the composition is skewed to low complexity. S587 is modified (phosphoserine). The stretch at 602–664 (AASSQAAVEE…VNDIKKALQS (63 aa)) forms a coiled coil.

In terms of assembly, can self-associate and form homotetramers. Interacts with CD2, F-actin capping protein, PIK3R3, GRB2, EGFR, MET, BLNK, MAP3K4, PDCD6IP, SPRY2, ARHGAP17, ARHGAP27, MAGI2, CRK, BCAR1, SOS1, ASAP1, ARAP3, HIP1R, SYNJ2, INPP5D and STAP1. Interacts with E3 ubiquitin-protein ligases CBL and CBLB, but does not interact with CBLC. Two molecules of SH3KBP1 seem to bind through their respective SH3 1 domain to one molecule of CBLB. The interaction with CBL or CBLB and EGFR is increased upon EGF stimulation. The interaction with CBL is attenuated by PDCD6IP. Interacts (via SH3 domains) with ARAP1. The interaction is independent of EGF and does not affect ARAP1 GTPase-activating activity but is involved in regulating ubiquitination and endocytic trafficking of EGFR. ARAP1 competes with CBL for binding to SH3KBP1 and prevents interaction of CBL with SH3KBP1; this is likely to regulate SH3KBP1-mediated internalization of EGFR. Interacts through its proline-rich region with the SH3 domain of endophilins SH3GL1, SH3GL2 and SH3GL3. The SH3KBP1-endophilin complex seems to associate with a complex containing the phosphorylated receptor (EGFR or MET) and phosphorylated CBL. Probably associates with ASAP1 and phosphorylated EGFR. Probably part of a complex consisting of at least SH3KBP1, ASAP1 and ARAP3. Interacts with focal adhesion kinases PTK2/FAK1 and PTK2B/PYK2, probably as a dimer. Interacts with DAB2 and probably associates with chathrin through its interaction with DAB2. Part of a complex consisting of SH3KBP1, DAB2, and clathrin heavy chain. DAB2 and clathrin dissociate from SH3KBP1 following growth factor treatment, enabling interaction with CBL. Interacts with DDN and probably associates with MAGI2 through its interaction with DDN. Interacts with the SH3 domains of SRC tyrosine-protein kinases SRC, LCK, LYN, FGR, FYN and HCK. Interacts with TRADD, BIRC2, TRAF1, TRAF2 and TNFR1, and the association with a TNFR1-associated complex upon stimulation with TNF-alpha seems to be mediated by SRC. Interacts (via SH3 domains) with SHKBP1 (via PXXXPR motifs). Interaction with CBL is abolished in the presence of SHKBP1. Interacts (via SH3 domains) with ZFP36 (via extreme C-terminal region). Interacts with MAP3K4; this interaction enhances the association with ZFP36. (Microbial infection) Interacts (via SH3 domains) with Chikungunya virus non-structural protein 3 (via C-terminus); this interaction plays a role in initiation of viral replication. Post-translationally, monoubiquitinated by CBL and CBLB after EGF stimulation; probably on its C-terminus. Ubiquitously expressed. Also expressed in some cancer cell lines.

Its subcellular location is the cytoplasm. It localises to the cytoskeleton. It is found in the cytoplasmic vesicle membrane. The protein localises to the synapse. The protein resides in the synaptosome. Its subcellular location is the cell junction. It localises to the focal adhesion. In terms of biological role, adapter protein involved in regulating diverse signal transduction pathways. Involved in the regulation of endocytosis and lysosomal degradation of ligand-induced receptor tyrosine kinases, including EGFR and MET/hepatocyte growth factor receptor, through an association with CBL and endophilins. The association with CBL, and thus the receptor internalization, may be inhibited by an interaction with PDCD6IP and/or SPRY2. Involved in regulation of ligand-dependent endocytosis of the IgE receptor. Attenuates phosphatidylinositol 3-kinase activity by interaction with its regulatory subunit. May be involved in regulation of cell adhesion; promotes the interaction between TTK2B and PDCD6IP. May be involved in the regulation of cellular stress response via the MAPK pathways through its interaction with MAP3K4. Is involved in modulation of tumor necrosis factor mediated apoptosis. Plays a role in the regulation of cell morphology and cytoskeletal organization. Required in the control of cell shape and migration. Has an essential role in the stimulation of B cell activation. This chain is SH3 domain-containing kinase-binding protein 1 (SH3KBP1), found in Homo sapiens (Human).